Consider the following 587-residue polypeptide: Potassium-transporting ATPase potassium-binding subunit (587 aa).

4 consecutive transmembrane segments (helical) span residues 1–21 (MSTS…LWVT), 60–80 (PVYA…LYLL), 89–109 (LNLG…VSFM), and 131–151 (GLAV…IAVV). Residues 162–188 (AVGGPGGPNGPGGPGGPNGPGAGSRDD) are disordered. Gly residues predominate over residues 164-183 (GGPGGPNGPGGPGGPNGPGA). 7 helical membrane passes run 208 to 228 (IRIL…GGAI), 280 to 300 (PTSW…FSLP), 314 to 334 (LAIV…NAAF), 409 to 429 (GLYG…LMIG), 449 to 469 (LYFL…MGLP), 514 to 534 (ALGL…LGMA), and 557 to 577 (FAGM…FPAL).

Belongs to the KdpA family. In terms of assembly, the system is composed of three essential subunits: KdpA, KdpB and KdpC.

The protein localises to the cell membrane. Its function is as follows. Part of the high-affinity ATP-driven potassium transport (or Kdp) system, which catalyzes the hydrolysis of ATP coupled with the electrogenic transport of potassium into the cytoplasm. This subunit binds the extracellular potassium ions and delivers the ions to the membrane domain of KdpB through an intramembrane tunnel. The sequence is that of Potassium-transporting ATPase potassium-binding subunit from Frankia alni (strain DSM 45986 / CECT 9034 / ACN14a).